Consider the following 196-residue polypeptide: CASP-like protein 1D1 (196 aa).

Positions 1-18 are enriched in basic and acidic residues; that stretch reads MASTDKPDRESIKSEEAP. The disordered stretch occupies residues 1–22; that stretch reads MASTDKPDRESIKSEEAPAAHP. Topologically, residues 1-29 are cytoplasmic; that stretch reads MASTDKPDRESIKSEEAPAAHPRRSNYSS. The helical transmembrane segment at 30–50 threads the bilayer; the sequence is VHVALRFLLFAASVTAVVVMV. At 51-84 the chain is on the extracellular side; it reads TAKQTKIVPVPGLPISVPLEAKFSDSPAFLYFIS. Residues 85 to 105 form a helical membrane-spanning segment; it reads ALSVAGLYGILTTLAAISIVL. The Cytoplasmic segment spans residues 106–112; it reads KPAYATR. The chain crosses the membrane as a helical span at residues 113–133; that stretch reads FLLHFALLDVLMLGIVASATG. Residues 134-167 are Extracellular-facing; it reads AAGGVAYVGLKGNSHVRWGKVCNVYDKFCQHVGS. Residues 168 to 188 form a helical membrane-spanning segment; sequence SIAVALFASVLLVLLTMLSVF. The Cytoplasmic segment spans residues 189–196; it reads SIYRKIPK.

Belongs to the Casparian strip membrane proteins (CASP) family. As to quaternary structure, homodimer and heterodimers.

The protein localises to the cell membrane. The chain is CASP-like protein 1D1 from Populus trichocarpa (Western balsam poplar).